Reading from the N-terminus, the 1238-residue chain is DNA-directed RNA polymerase subunit beta (1238 aa).

Belongs to the RNA polymerase beta chain family. As to quaternary structure, the RNAP catalytic core consists of 2 alpha, 1 beta, 1 beta' and 1 omega subunit. When a sigma factor is associated with the core the holoenzyme is formed, which can initiate transcription.

The enzyme catalyses RNA(n) + a ribonucleoside 5'-triphosphate = RNA(n+1) + diphosphate. Functionally, DNA-dependent RNA polymerase catalyzes the transcription of DNA into RNA using the four ribonucleoside triphosphates as substrates. The protein is DNA-directed RNA polymerase subunit beta of Clostridioides difficile (strain 630) (Peptoclostridium difficile).